Reading from the N-terminus, the 234-residue chain is Segregation and condensation protein A (234 aa).

The protein belongs to the ScpA family. Component of a cohesin-like complex composed of ScpA, ScpB and the Smc homodimer, in which ScpA and ScpB bind to the head domain of Smc. The presence of the three proteins is required for the association of the complex with DNA.

The protein localises to the cytoplasm. Participates in chromosomal partition during cell division. May act via the formation of a condensin-like complex containing Smc and ScpB that pull DNA away from mid-cell into both cell halves. In Streptococcus pyogenes serotype M12 (strain MGAS2096), this protein is Segregation and condensation protein A.